A 335-amino-acid chain; its full sequence is Transcriptional adapter 1 (335 aa).

Belongs to the TADA1 family. As to quaternary structure, component of the STAGA transcription coactivator-HAT complex, at least composed of SUPT3H, GCN5L2, TAF5L, TAF6L, SUPT7L, TADA3L, TAD1L, TAF10, TAF12, TRRAP and TAF9.

It is found in the nucleus. Its function is as follows. Probably involved in transcriptional regulation. This chain is Transcriptional adapter 1 (TADA1), found in Bos taurus (Bovine).